A 124-amino-acid chain; its full sequence is Seripauperin-23 (124 aa).

An N-terminal signal peptide occupies residues 1–20 (MVKLTSIVAGVAAIAAGVAA).

This sequence belongs to the SRP1/TIP1 family. Seripauperin subfamily. Post-translationally, O-glycosylated.

The protein resides in the secreted. It localises to the cell wall. Its function is as follows. Component of the cell wall. The chain is Seripauperin-23 (PAU23) from Saccharomyces cerevisiae (strain ATCC 204508 / S288c) (Baker's yeast).